A 280-amino-acid polypeptide reads, in one-letter code: MNSYLLAFKSGFGFLSTIPVGITMEGIDELMKKIFFYPVVGAVLGLLIGIVAYAGQLVFPGPVLAALIMGFVYYITGFNHLDGVTDMGDGFMAHGSLEKKVKALKDTTLGTGGVAFGILVLLAFYGSIRSVQEEGIAAFGSNLPFLMFASMFIAEVSAKQSMLTIAAFGKPLPRLKEQTYPGLGEMTINGATRKNFLIGFIFGAVVCCLPFGLIGLIPYLAACISALVLLNRSYAHFGGLNGDGIGTANEIGRITALIVIAVTLKLSLNGYLGGLEWTLL.

The next 7 helical transmembrane spans lie at 4 to 24 (YLLA…GITM), 34 to 54 (IFFY…VAYA), 58 to 78 (VFPG…ITGF), 108 to 128 (TLGT…YGSI), 136 to 156 (IAAF…IAEV), 197 to 217 (LIGF…IGLI), and 254 to 274 (ITAL…YLGG).

This sequence belongs to the CobS family. It depends on Mg(2+) as a cofactor.

It localises to the cell membrane. The enzyme catalyses alpha-ribazole + adenosylcob(III)inamide-GDP = adenosylcob(III)alamin + GMP + H(+). The catalysed reaction is alpha-ribazole 5'-phosphate + adenosylcob(III)inamide-GDP = adenosylcob(III)alamin 5'-phosphate + GMP + H(+). Its pathway is cofactor biosynthesis; adenosylcobalamin biosynthesis; adenosylcobalamin from cob(II)yrinate a,c-diamide: step 7/7. Functionally, joins adenosylcobinamide-GDP and alpha-ribazole to generate adenosylcobalamin (Ado-cobalamin). Also synthesizes adenosylcobalamin 5'-phosphate from adenosylcobinamide-GDP and alpha-ribazole 5'-phosphate. This chain is Adenosylcobinamide-GDP ribazoletransferase, found in Methanosarcina mazei (strain ATCC BAA-159 / DSM 3647 / Goe1 / Go1 / JCM 11833 / OCM 88) (Methanosarcina frisia).